Consider the following 89-residue polypeptide: Pigment-dispersing hormone peptides (89 aa).

A signal peptide spans 1-22 (MTAMAVSGKLLTALVLSTYILG). Alanine amide is present on Ala-86.

Belongs to the arthropod PDH family.

It localises to the secreted. Its function is as follows. Capable of inducing pigment dispersion in the chromatophores of the fiddler crab Uca pugilator. The polypeptide is Pigment-dispersing hormone peptides (Romalea microptera (Eastern lubber grasshopper)).